We begin with the raw amino-acid sequence, 206 residues long: Large ribosomal subunit protein uL4 (206 aa).

The segment covering 65–76 (KQKGTGRARHSS) has biased composition (basic residues). The disordered stretch occupies residues 65–94 (KQKGTGRARHSSARAPQFRGGGKAHGPVVR).

It belongs to the universal ribosomal protein uL4 family. In terms of assembly, part of the 50S ribosomal subunit.

Functionally, one of the primary rRNA binding proteins, this protein initially binds near the 5'-end of the 23S rRNA. It is important during the early stages of 50S assembly. It makes multiple contacts with different domains of the 23S rRNA in the assembled 50S subunit and ribosome. In terms of biological role, forms part of the polypeptide exit tunnel. This Bartonella quintana (strain Toulouse) (Rochalimaea quintana) protein is Large ribosomal subunit protein uL4.